Consider the following 763-residue polypeptide: Phospholipid phosphatase-related protein type 4 (763 aa).

Residues 33–54 (VHTSPGGGRRPGQAAGMSAKER) are disordered. Ser-36 is subject to Phosphoserine. 3 helical membrane-spanning segments follow: residues 67–87 (LPCFYFVELPILASSVVSLYF), 119–139 (AIPFLMLLSLAFAGPAITIMV), and 178–198 (FVGVHVFGLCSTALITDIIQL). 2 N-linked (GlcNAc...) asparagine glycosylation sites follow: Asn-214 and Asn-219. Residues 247–267 (SFPSQHATLAAFAAVYVSMYF) form a helical membrane-spanning segment. Asn-268 is a glycosylation site (N-linked (GlcNAc...) asparagine). 2 consecutive transmembrane segments (helical) span residues 276–296 (KLLKPLLVFTFIICGIICGLT) and 308–328 (VYCGFLIGGGIALYLGLYAVG). Residue Ser-346 is modified to Phosphoserine. Asn-362 carries an N-linked (GlcNAc...) asparagine glycan. Ser-385 is subject to Phosphoserine. N-linked (GlcNAc...) asparagine glycosylation occurs at Asn-432. Residue Ser-438 is modified to Phosphoserine. Residue Asn-455 is glycosylated (N-linked (GlcNAc...) asparagine). The tract at residues 458–529 (RKLSLQVIEP…PRVSIQSRPG (72 aa)) is disordered. 2 positions are modified to phosphoserine: Ser-461 and Ser-472. Asn-513, Asn-543, and Asn-568 each carry an N-linked (GlcNAc...) asparagine glycan. Ser-606 carries the phosphoserine modification. The segment covering 669-694 (DSESCESLKDSFGSGDRKRSNIDSNE) has biased composition (basic and acidic residues). Disordered regions lie at residues 669–698 (DSESCESLKDSFGSGDRKRSNIDSNEHHHH) and 739–763 (ERSNSPENTRNIFYKGTSPTRAYKD). Positions 740 to 749 (RSNSPENTRN) are enriched in polar residues.

Belongs to the PA-phosphatase related phosphoesterase family. In terms of processing, O-glycosylated. Probably at Ser-346. As to expression, expressed by glutamatergic neurons (at protein level).

It localises to the postsynaptic density membrane. In terms of biological role, postsynaptic density membrane protein that indirectly regulates glutamatergic synaptic transmission through lysophosphatidic acid (LPA)-mediated signaling pathways. Binds lysophosphatidic acid (LPA) and mediates its internalization into cells. Could act as receptor or a transporter of this lipid at the post-synaptic membrane. Modulates lysophosphatidic acid (LPA) activity in neuron axonal outgrowth during development by attenuating phospholipid-induced axon collapse. This chain is Phospholipid phosphatase-related protein type 4, found in Homo sapiens (Human).